A 139-amino-acid polypeptide reads, in one-letter code: ATP synthase epsilon chain (139 aa).

The protein belongs to the ATPase epsilon chain family. In terms of assembly, F-type ATPases have 2 components, CF(1) - the catalytic core - and CF(0) - the membrane proton channel. CF(1) has five subunits: alpha(3), beta(3), gamma(1), delta(1), epsilon(1). CF(0) has three main subunits: a, b and c.

It localises to the cell inner membrane. In terms of biological role, produces ATP from ADP in the presence of a proton gradient across the membrane. The sequence is that of ATP synthase epsilon chain (atpC) from Escherichia coli O157:H7.